The chain runs to 355 residues: Adenine deaminase (355 aa).

Residues histidine 23, histidine 25, and histidine 211 each contribute to the Zn(2+) site. Glutamate 214 acts as the Proton donor in catalysis. Residue aspartate 292 participates in Zn(2+) binding. A substrate-binding site is contributed by aspartate 293.

Belongs to the metallo-dependent hydrolases superfamily. Adenosine and AMP deaminases family. Adenine deaminase type 2 subfamily. It depends on Zn(2+) as a cofactor.

It is found in the cytoplasm. Its subcellular location is the nucleus. It carries out the reaction adenine + H2O + H(+) = hypoxanthine + NH4(+). In terms of biological role, catalyzes the hydrolytic deamination of adenine to hypoxanthine. Plays an important role in the purine salvage pathway and in nitrogen catabolism. The polypeptide is Adenine deaminase (Kluyveromyces lactis (strain ATCC 8585 / CBS 2359 / DSM 70799 / NBRC 1267 / NRRL Y-1140 / WM37) (Yeast)).